A 651-amino-acid chain; its full sequence is Acetyl-coenzyme A synthetase (651 aa).

CoA-binding positions include 189 to 192 (RGGK), Thr-311, and Asn-335. ATP is bound by residues 387–389 (GEP), 411–416 (DTWWQT), Asp-500, and Arg-515. Ser-523 lines the CoA pocket. Arg-526 serves as a coordination point for ATP. Positions 537, 539, and 542 each coordinate Mg(2+). Arg-586 lines the CoA pocket. At Lys-611 the chain carries N6-acetyllysine.

It belongs to the ATP-dependent AMP-binding enzyme family. It depends on Mg(2+) as a cofactor. Post-translationally, acetylated. Deacetylation by the SIR2-homolog deacetylase activates the enzyme.

It catalyses the reaction acetate + ATP + CoA = acetyl-CoA + AMP + diphosphate. Functionally, catalyzes the conversion of acetate into acetyl-CoA (AcCoA), an essential intermediate at the junction of anabolic and catabolic pathways. AcsA undergoes a two-step reaction. In the first half reaction, AcsA combines acetate with ATP to form acetyl-adenylate (AcAMP) intermediate. In the second half reaction, it can then transfer the acetyl group from AcAMP to the sulfhydryl group of CoA, forming the product AcCoA. This Brucella abortus (strain S19) protein is Acetyl-coenzyme A synthetase.